Reading from the N-terminus, the 62-residue chain is Conotoxin Lt5.5 (62 aa).

The N-terminal stretch at 1-22 (MRCLQVFIIFLLLIPSPPSVDA) is a signal peptide. A propeptide spanning residues 23–48 (QRKTKDDVPLASFHDNAKRTLKRLWN) is cleaved from the precursor.

This sequence belongs to the conotoxin T superfamily. In terms of processing, contains 2 disulfide bonds that can be either 'C1-C3, C2-C4' or 'C1-C4, C2-C3', since these disulfide connectivities have been observed for conotoxins with cysteine framework V (for examples, see AC P0DQQ7 and AC P81755). Expressed by the venom duct.

It localises to the secreted. The protein is Conotoxin Lt5.5 of Conus litteratus (Lettered cone).